We begin with the raw amino-acid sequence, 154 residues long: Putative glutamine amidotransferase-like protein RP712 (154 aa).

The region spanning 1–94 (MSIEKEKFWA…QQSVWSFHNK (94 aa)) is the Glutamine amidotransferase type-1 domain.

The chain is Putative glutamine amidotransferase-like protein RP712 from Rickettsia prowazekii (strain Madrid E).